The primary structure comprises 208 residues: uncharacterized protein (208 aa).

An N-terminal signal peptide occupies residues 1–16 (MKFLLIACLAVPAILA). Residue Asn-79 is glycosylated (N-linked (GlcNAc...) asparagine).

This is an uncharacterized protein from Caenorhabditis elegans.